Consider the following 246-residue polypeptide: NH(3)-dependent NAD(+) synthetase (246 aa).

An ATP-binding site is contributed by 29-36 (GLSGGIDS). D35 contacts Mg(2+). R110 is a deamido-NAD(+) binding site. An ATP-binding site is contributed by T130. Position 135 (E135) interacts with Mg(2+). K159 and S181 together coordinate ATP.

Belongs to the NAD synthetase family. As to quaternary structure, homodimer.

The enzyme catalyses deamido-NAD(+) + NH4(+) + ATP = AMP + diphosphate + NAD(+) + H(+). It participates in cofactor biosynthesis; NAD(+) biosynthesis; NAD(+) from deamido-NAD(+) (ammonia route): step 1/1. Functionally, catalyzes the ATP-dependent amidation of deamido-NAD to form NAD. Uses ammonia as a nitrogen source. The protein is NH(3)-dependent NAD(+) synthetase of Campylobacter jejuni subsp. jejuni serotype O:6 (strain 81116 / NCTC 11828).